Here is a 518-residue protein sequence, read N- to C-terminus: Chromosomal replication initiator protein DnaA (518 aa).

Residues 1–73 form a domain I, interacts with DnaA modulators region; sequence MTLAEFWPLC…REELAAGRPA (73 aa). Residues 73-180 form a domain II region; sequence AFVFKPGEGV…DAEEARYEQT (108 aa). The tract at residues 144-180 is disordered; sequence HEPRQAAGPASRPESAAVAKARTDAQRDAEEARYEQT. Over residues 164-177 the composition is skewed to basic and acidic residues; that stretch reads ARTDAQRDAEEARY. The interval 181–397 is domain III, AAA+ region; that stretch reads NLSPDYTFDT…GAFNRVGASS (217 aa). The ATP site is built by Gly225, Gly227, Lys228, and Thr229. A domain IV, binds dsDNA region spans residues 398–518; sequence RFMNRPVIDI…YEKLLILIQN (121 aa).

It belongs to the DnaA family. As to quaternary structure, oligomerizes as a right-handed, spiral filament on DNA at oriC.

The protein resides in the cytoplasm. Plays an essential role in the initiation and regulation of chromosomal replication. ATP-DnaA binds to the origin of replication (oriC) to initiate formation of the DNA replication initiation complex once per cell cycle. Binds the DnaA box (a 9 base pair repeat at the origin) and separates the double-stranded (ds)DNA. Forms a right-handed helical filament on oriC DNA; dsDNA binds to the exterior of the filament while single-stranded (ss)DNA is stabiized in the filament's interior. The ATP-DnaA-oriC complex binds and stabilizes one strand of the AT-rich DNA unwinding element (DUE), permitting loading of DNA polymerase. After initiation quickly degrades to an ADP-DnaA complex that is not apt for DNA replication. Binds acidic phospholipids. This is Chromosomal replication initiator protein DnaA from Neisseria gonorrhoeae (strain ATCC 700825 / FA 1090).